A 426-amino-acid chain; its full sequence is L-ascorbate peroxidase T, chloroplastic (426 aa).

The active-site Proton acceptor is H112. Position 241 (H241) interacts with heme b. T242 is a K(+) binding site. Positions 245-269 (RARPDRSGWGKPETKYTKTGPGEAG) are disordered. A compositionally biased stretch (basic and acidic residues) spans 246 to 260 (ARPDRSGWGKPETKY). Positions 274 and 281 each coordinate K(+). Residues 397–417 (YFLNIIIAIGVLVLLSTLFGG) traverse the membrane as a helical segment.

The protein belongs to the peroxidase family. Ascorbate peroxidase subfamily. The cofactor is heme b.

The protein localises to the plastid. It localises to the chloroplast thylakoid membrane. The catalysed reaction is L-ascorbate + H2O2 = L-dehydroascorbate + 2 H2O. Its function is as follows. Plays a key role in hydrogen peroxide removal. This is L-ascorbate peroxidase T, chloroplastic (APXT) from Arabidopsis thaliana (Mouse-ear cress).